We begin with the raw amino-acid sequence, 139 residues long: Transcription antitermination protein NusB (139 aa).

The protein belongs to the NusB family.

Functionally, involved in transcription antitermination. Required for transcription of ribosomal RNA (rRNA) genes. Binds specifically to the boxA antiterminator sequence of the ribosomal RNA (rrn) operons. The chain is Transcription antitermination protein NusB from Idiomarina loihiensis (strain ATCC BAA-735 / DSM 15497 / L2-TR).